The primary structure comprises 787 residues: GPI ethanolamine phosphate transferase 2 (787 aa).

3 N-linked (GlcNAc...) asparagine glycosylation sites follow: Asn33, Asn185, and Asn397. 3 consecutive transmembrane segments (helical) span residues 400 to 420, 426 to 446, and 455 to 475; these read FLTY…VWNF, YIEH…SSFI, and WITI…LVVL. N-linked (GlcNAc...) asparagine glycosylation is present at Asn485. 2 helical membrane passes run 504–524 and 536–556; these read HTSV…FPFL and LLSV…FAIV. Asn581 carries an N-linked (GlcNAc...) asparagine glycan. Residues 591 to 611 form a helical membrane-spanning segment; that stretch reads LVPIARIFFQICGVSIIILLF. N-linked (GlcNAc...) asparagine glycosylation is present at Asn617. The helical transmembrane segment at 629–651 threads the bilayer; the sequence is VIKFVLLLQTSSANIPLFLIFEI. The N-linked (GlcNAc...) asparagine glycan is linked to Asn669. 4 helical membrane passes run 671–693, 699–719, 740–760, and 767–787; these read TFFQ…YNGV, IYVV…YWAL, GTCL…WSVF, and YAAW…LGVL.

It belongs to the PIGG/PIGN/PIGO family. PIGG subfamily.

It localises to the endoplasmic reticulum membrane. It functions in the pathway glycolipid biosynthesis; glycosylphosphatidylinositol-anchor biosynthesis. Functionally, ethanolamine phosphate transferase involved in glycosylphosphatidylinositol-anchor biosynthesis. Transfers ethanolamine phosphate to the GPI second mannose. In Kluyveromyces lactis (strain ATCC 8585 / CBS 2359 / DSM 70799 / NBRC 1267 / NRRL Y-1140 / WM37) (Yeast), this protein is GPI ethanolamine phosphate transferase 2 (LAS21).